The sequence spans 256 residues: uncharacterized protein (256 aa).

The protein belongs to the glycosyltransferase 2 family.

This is an uncharacterized protein from Acanthamoeba polyphaga mimivirus (APMV).